Consider the following 307-residue polypeptide: Cuticle collagen 36 (307 aa).

Disordered stretches follow at residues 76–102 and 116–307; these read TRSR…GGPT and QQGP…PPGY. Residues 86 to 102 show a composition bias toward gly residues; the sequence is EGSGSGGSGSGGYGGPT. 6 triple-helical region regions span residues 89–105, 118–150, 167–187, 194–226, 231–257, and 260–295; these read GSGG…TGAG, GPAG…EGSI, GPQG…KGKS, GKNG…PGRV, GAAG…AGLT, and GGQG…EGSC. Positions 157-168 are enriched in pro residues; sequence PSEPCIICPPGP. Residues 186–196 show a composition bias toward basic and acidic residues; sequence KSQERAADGKN. Positions 202–220 are enriched in pro residues; the sequence is IGPPGPPGGVGEPGPPGPA. Low complexity predominate over residues 231-242; that stretch reads GAAGPAGPRGVK. Gly residues predominate over residues 258–278; sequence EIGGQGPPGDAGGPGPVGGQG. Pro residues predominate over residues 279 to 288; sequence PPGPQGPQGP.

This sequence belongs to the cuticular collagen family. As to quaternary structure, collagen polypeptide chains are complexed within the cuticle by disulfide bonds and other types of covalent cross-links.

Its function is as follows. Nematode cuticles are composed largely of collagen-like proteins. The cuticle functions both as an exoskeleton and as a barrier to protect the worm from its environment. This Caenorhabditis elegans protein is Cuticle collagen 36 (col-36).